An 84-amino-acid polypeptide reads, in one-letter code: Large ribosomal subunit protein bL27 (84 aa).

Residues 1–23 (MAHKKGASSSRNGRESAAQRLGV) form a disordered region.

The protein belongs to the bacterial ribosomal protein bL27 family.

The chain is Large ribosomal subunit protein bL27 from Salinispora arenicola (strain CNS-205).